We begin with the raw amino-acid sequence, 80 residues long: Acyl carrier protein (80 aa).

Residues Lys-2–Asn-77 enclose the Carrier domain. Ser-37 carries the O-(pantetheine 4'-phosphoryl)serine modification.

It belongs to the acyl carrier protein (ACP) family. 4'-phosphopantetheine is transferred from CoA to a specific serine of apo-ACP by AcpS. This modification is essential for activity because fatty acids are bound in thioester linkage to the sulfhydryl of the prosthetic group.

It localises to the cytoplasm. It functions in the pathway lipid metabolism; fatty acid biosynthesis. Functionally, carrier of the growing fatty acid chain in fatty acid biosynthesis. The polypeptide is Acyl carrier protein (Buchnera aphidicola subsp. Acyrthosiphon pisum (strain 5A)).